We begin with the raw amino-acid sequence, 623 residues long: Glutathione import ATP-binding protein GsiA (623 aa).

ABC transporter domains lie at 15–269 (VSGL…QTLL) and 325–564 (LRSG…RKLM). Residues 49-56 (GESGSGKS) and 357-364 (GESGSGKS) each bind ATP.

Belongs to the ABC transporter superfamily. Glutathione importer (TC 3.A.1.5.11) family. As to quaternary structure, the complex is composed of two ATP-binding proteins (GsiA), two transmembrane proteins (GsiC and GsiD) and a solute-binding protein (GsiB).

It localises to the cell inner membrane. It catalyses the reaction glutathione(out) + ATP + H2O = glutathione(in) + ADP + phosphate + H(+). Its function is as follows. Part of the ABC transporter complex GsiABCD involved in glutathione import. Responsible for energy coupling to the transport system. This is Glutathione import ATP-binding protein GsiA from Salmonella typhi.